Reading from the N-terminus, the 476-residue chain is Aspartyl/glutamyl-tRNA(Asn/Gln) amidotransferase subunit B (476 aa).

It belongs to the GatB/GatE family. GatB subfamily. In terms of assembly, heterotrimer of A, B and C subunits.

It catalyses the reaction L-glutamyl-tRNA(Gln) + L-glutamine + ATP + H2O = L-glutaminyl-tRNA(Gln) + L-glutamate + ADP + phosphate + H(+). The enzyme catalyses L-aspartyl-tRNA(Asn) + L-glutamine + ATP + H2O = L-asparaginyl-tRNA(Asn) + L-glutamate + ADP + phosphate + 2 H(+). In terms of biological role, allows the formation of correctly charged Asn-tRNA(Asn) or Gln-tRNA(Gln) through the transamidation of misacylated Asp-tRNA(Asn) or Glu-tRNA(Gln) in organisms which lack either or both of asparaginyl-tRNA or glutaminyl-tRNA synthetases. The reaction takes place in the presence of glutamine and ATP through an activated phospho-Asp-tRNA(Asn) or phospho-Glu-tRNA(Gln). The sequence is that of Aspartyl/glutamyl-tRNA(Asn/Gln) amidotransferase subunit B from Vesicomyosocius okutanii subsp. Calyptogena okutanii (strain HA).